The chain runs to 519 residues: Probable cytosol aminopeptidase (519 aa).

K251 and D256 together coordinate Mn(2+). Residue K263 is part of the active site. Mn(2+)-binding residues include D274, D333, and E335. The active site involves R337. The span at 487-502 shows a compositional bias: low complexity; that stretch reads VAPAAPAAPAAPAARP. Residues 487–519 are disordered; that stretch reads VAPAAPAAPAAPAARPAAKRTGRSQGGLKRTAP.

This sequence belongs to the peptidase M17 family. Requires Mn(2+) as cofactor.

Its subcellular location is the cytoplasm. It catalyses the reaction Release of an N-terminal amino acid, Xaa-|-Yaa-, in which Xaa is preferably Leu, but may be other amino acids including Pro although not Arg or Lys, and Yaa may be Pro. Amino acid amides and methyl esters are also readily hydrolyzed, but rates on arylamides are exceedingly low.. It carries out the reaction Release of an N-terminal amino acid, preferentially leucine, but not glutamic or aspartic acids.. Its function is as follows. Presumably involved in the processing and regular turnover of intracellular proteins. Catalyzes the removal of unsubstituted N-terminal amino acids from various peptides. The chain is Probable cytosol aminopeptidase from Verminephrobacter eiseniae (strain EF01-2).